The following is an 85-amino-acid chain: U4-theraphotoxin-Hhn1u (85 aa).

The first 22 residues, 1-22, serve as a signal peptide directing secretion; that stretch reads MKMTLIAILTCAAVLVLHTTAA. The propeptide occupies 23 to 48; sequence EELEAESQLMEVGMPDTELEAVDEER. Intrachain disulfides connect Cys52/Cys66, Cys56/Cys77, and Cys71/Cys82.

This sequence belongs to the neurotoxin 12 (Hwtx-2) family. 02 (Hwtx-2) subfamily. As to expression, expressed by the venom gland.

The protein localises to the secreted. In terms of biological role, postsynaptic neurotoxin. The chain is U4-theraphotoxin-Hhn1u from Cyriopagopus hainanus (Chinese bird spider).